The following is a 337-amino-acid chain: Heat-inducible transcription repressor HrcA (337 aa).

This sequence belongs to the HrcA family.

Negative regulator of class I heat shock genes (grpE-dnaK-dnaJ and groELS operons). Prevents heat-shock induction of these operons. This Metamycoplasma arthritidis (strain 158L3-1) (Mycoplasma arthritidis) protein is Heat-inducible transcription repressor HrcA.